Reading from the N-terminus, the 426-residue chain is Serine--tRNA ligase (426 aa).

233–235 (TAE) is a binding site for L-serine. Residue 264 to 266 (RSE) coordinates ATP. Glu287 contributes to the L-serine binding site. ATP is bound at residue 351 to 354 (EISS). Ser387 is a binding site for L-serine.

The protein belongs to the class-II aminoacyl-tRNA synthetase family. Type-1 seryl-tRNA synthetase subfamily. Homodimer. The tRNA molecule binds across the dimer.

The protein resides in the cytoplasm. The catalysed reaction is tRNA(Ser) + L-serine + ATP = L-seryl-tRNA(Ser) + AMP + diphosphate + H(+). The enzyme catalyses tRNA(Sec) + L-serine + ATP = L-seryl-tRNA(Sec) + AMP + diphosphate + H(+). It participates in aminoacyl-tRNA biosynthesis; selenocysteinyl-tRNA(Sec) biosynthesis; L-seryl-tRNA(Sec) from L-serine and tRNA(Sec): step 1/1. Catalyzes the attachment of serine to tRNA(Ser). Is also able to aminoacylate tRNA(Sec) with serine, to form the misacylated tRNA L-seryl-tRNA(Sec), which will be further converted into selenocysteinyl-tRNA(Sec). The chain is Serine--tRNA ligase from Pseudomonas savastanoi pv. phaseolicola (strain 1448A / Race 6) (Pseudomonas syringae pv. phaseolicola (strain 1448A / Race 6)).